Reading from the N-terminus, the 542-residue chain is Putative serine/threonine-protein kinase L205 (542 aa).

Positions 20-30 (FEKKSVGHNSD) are enriched in basic and acidic residues. The tract at residues 20-49 (FEKKSVGHNSDDEYDDTVPYNEDDETSEEE) is disordered. A compositionally biased stretch (acidic residues) spans 31 to 49 (DEYDDTVPYNEDDETSEEE). One can recognise a Protein kinase domain in the interval 69–538 (YLLLKKIGSG…ADELLKHPWL (470 aa)). ATP is bound by residues 75 to 83 (IGSGNNASV) and K98. D201 serves as the catalytic Proton acceptor. The tract at residues 278 to 314 (EELIPDDPDNNEKYYDSTDSEEYDYSDNSDYYDDDED) is disordered. Residues 295–314 (TDSEEYDYSDNSDYYDDDED) show a composition bias toward acidic residues.

The protein belongs to the protein kinase superfamily. Ser/Thr protein kinase family.

The enzyme catalyses L-seryl-[protein] + ATP = O-phospho-L-seryl-[protein] + ADP + H(+). The catalysed reaction is L-threonyl-[protein] + ATP = O-phospho-L-threonyl-[protein] + ADP + H(+). The polypeptide is Putative serine/threonine-protein kinase L205 (Acanthamoeba polyphaga (Amoeba)).